The chain runs to 710 residues: Polyribonucleotide nucleotidyltransferase (710 aa).

Residues aspartate 487 and aspartate 493 each coordinate Mg(2+). One can recognise a KH domain in the interval 554-613 (PRIEVMNIPVDKIREVIGSGGKVIREIVEKTGAKINIEDDGTVKIASSSGKEIEAARKWI). The 69-residue stretch at 623–691 (GQIYEGTVVK…ERGKVRLSMK (69 aa)) folds into the S1 motif domain.

Belongs to the polyribonucleotide nucleotidyltransferase family. The cofactor is Mg(2+).

It is found in the cytoplasm. It catalyses the reaction RNA(n+1) + phosphate = RNA(n) + a ribonucleoside 5'-diphosphate. Its function is as follows. Involved in mRNA degradation. Catalyzes the phosphorolysis of single-stranded polyribonucleotides processively in the 3'- to 5'-direction. The chain is Polyribonucleotide nucleotidyltransferase from Rhizobium rhizogenes (strain K84 / ATCC BAA-868) (Agrobacterium radiobacter).